A 352-amino-acid polypeptide reads, in one-letter code: Putative GATA transcription factor 22 (352 aa).

The interval 27–53 (SLHHHLQQQQQQQQHFHHQASSNPSSL) is disordered. A compositionally biased stretch (low complexity) spans 33-53 (QQQQQQQQHFHHQASSNPSSL). Positions 112–119 (PKKETRLK) match the Nuclear localization signal motif. The disordered stretch occupies residues 163–189 (AIITTSDSSKQHTNNDQSSNLSNSERQ). Residues 165–189 (ITTSDSSKQHTNNDQSSNLSNSERQ) show a composition bias toward polar residues. A GATA-type zinc finger spans residues 195–249 (DCVIRICSDCNTTKTPLWRSGPRGPKSLCNACGIRQRKARRAAMATATATAVSGV).

This sequence belongs to the type IV zinc-finger family. Class B subfamily. Forms heterodimers with GATA18. In terms of tissue distribution, expressed predominantly in leaves, and barely in stems, flowers and siliques.

It localises to the nucleus. Functionally, transcriptional regulator that specifically binds 5'-GATA-3' or 5'-GAT-3' motifs within gene promoters. Involved in the modulation of chloroplast development, growth and division in a cytokinin-dependent manner. Repressor of the gibberellic acid (GA) signaling pathway that regulates flowering and modulates greening, in a SOC1-dependent manner. Prevents the accumulation of SOC1 during flowering. Promotes chlorophyll biosynthesis throughout the plant, by regulating chlorophyll biosynthetic genes (e.g. HEMA1 and GUN4) and chloroplast localized glutamate synthase (e.g. GLU1). Involved in the regulation of sugar-sensing genes (e.g. HXK1, HXK2, STP13 and PLT6). Regulator of germination, senescence, elongation growth and flowering time. Influences also leaf starch content. The polypeptide is Putative GATA transcription factor 22 (Arabidopsis thaliana (Mouse-ear cress)).